We begin with the raw amino-acid sequence, 269 residues long: Sulfur carrier protein FdhD (269 aa).

C111 (cysteine persulfide intermediate) is an active-site residue.

It belongs to the FdhD family.

The protein localises to the cytoplasm. Its function is as follows. Required for formate dehydrogenase (FDH) activity. Acts as a sulfur carrier protein that transfers sulfur from IscS to the molybdenum cofactor prior to its insertion into FDH. This Brucella abortus biovar 1 (strain 9-941) protein is Sulfur carrier protein FdhD.